A 330-amino-acid polypeptide reads, in one-letter code: Aspartate--ammonia ligase (330 aa).

Belongs to the class-II aminoacyl-tRNA synthetase family. AsnA subfamily.

The protein resides in the cytoplasm. The catalysed reaction is L-aspartate + NH4(+) + ATP = L-asparagine + AMP + diphosphate + H(+). It functions in the pathway amino-acid biosynthesis; L-asparagine biosynthesis; L-asparagine from L-aspartate (ammonia route): step 1/1. This is Aspartate--ammonia ligase from Escherichia coli O7:K1 (strain IAI39 / ExPEC).